We begin with the raw amino-acid sequence, 257 residues long: uncharacterized protein (257 aa).

Residues 1–22 (MGYLKRFALYISVMILMFAIAG) form the signal peptide. Cys-23 is lipidated: N-palmitoyl cysteine. Cys-23 carries S-diacylglycerol cysteine lipidation.

It belongs to the staphylococcal tandem lipoprotein family.

Its subcellular location is the cell membrane. This is an uncharacterized protein from Staphylococcus aureus (strain MRSA252).